The primary structure comprises 165 residues: Disulfide bond formation protein B (165 aa).

The Cytoplasmic segment spans residues 1–10 (MPAWLTNRTI). Residues 11-27 (YFLCFLAIAGLMGFAFY) form a helical membrane-spanning segment. Residues 28 to 45 (LQYVKDLEPCPLCMAQRI) lie on the Periplasmic side of the membrane. C37 and C40 are oxidised to a cystine. A helical membrane pass occupies residues 46–62 (AFVLAGLVFLAAALHNP). Residues 63 to 68 (KNTGTT) lie on the Cytoplasmic side of the membrane. A helical membrane pass occupies residues 69 to 86 (VYAFLGWVTTLGGAALAT). The Periplasmic segment spans residues 87–143 (RQLWLQSLPADQVPACGPGLEYMLEAFPFSEVLTMMLTGTGECAEVQWTFLGLSIPG). An intrachain disulfide couples C102 to C129. A helical transmembrane segment spans residues 144–162 (WTLVAFIGFTAVWAFAWVR). Over 163–165 (RPR) the chain is Cytoplasmic.

Belongs to the DsbB family.

The protein localises to the cell inner membrane. Functionally, required for disulfide bond formation in some periplasmic proteins. Acts by oxidizing the DsbA protein. The chain is Disulfide bond formation protein B from Hahella chejuensis (strain KCTC 2396).